The chain runs to 87 residues: Phosphoribosyl-ATP pyrophosphatase (87 aa).

It belongs to the PRA-PH family.

It localises to the cytoplasm. It carries out the reaction 1-(5-phospho-beta-D-ribosyl)-ATP + H2O = 1-(5-phospho-beta-D-ribosyl)-5'-AMP + diphosphate + H(+). The protein operates within amino-acid biosynthesis; L-histidine biosynthesis; L-histidine from 5-phospho-alpha-D-ribose 1-diphosphate: step 2/9. This chain is Phosphoribosyl-ATP pyrophosphatase, found in Kocuria rhizophila (strain ATCC 9341 / DSM 348 / NBRC 103217 / DC2201).